The sequence spans 314 residues: Ribosomal protein L11 methyltransferase (314 aa).

4 residues coordinate S-adenosyl-L-methionine: T164, G185, D207, and N249.

This sequence belongs to the methyltransferase superfamily. PrmA family.

The protein resides in the cytoplasm. The catalysed reaction is L-lysyl-[protein] + 3 S-adenosyl-L-methionine = N(6),N(6),N(6)-trimethyl-L-lysyl-[protein] + 3 S-adenosyl-L-homocysteine + 3 H(+). Functionally, methylates ribosomal protein L11. The polypeptide is Ribosomal protein L11 methyltransferase (Clostridium beijerinckii (strain ATCC 51743 / NCIMB 8052) (Clostridium acetobutylicum)).